A 332-amino-acid polypeptide reads, in one-letter code: Cell growth regulator with RING finger domain protein 1 (332 aa).

Residues 274–309 (CVVCQNGGVNWVLLPCRHACLCDSCVRYFKQCPMCR) form an RING-type zinc finger.

The protein localises to the nucleus. Its subcellular location is the endoplasmic reticulum. Its function is as follows. Able to inhibit growth in several cell lines. The protein is Cell growth regulator with RING finger domain protein 1 (Cgrrf1) of Mus musculus (Mouse).